A 153-amino-acid chain; its full sequence is DNA gyrase inhibitor 1 (153 aa).

This sequence belongs to the DNA gyrase inhibitor family. Interacts with DNA gyrase.

The protein localises to the cytoplasm. Functionally, inhibits the supercoiling activity of DNA gyrase. Acts by inhibiting DNA gyrase at an early step, prior to (or at the step of) binding of DNA by the gyrase. It protects cells against toxins that target DNA gyrase, by inhibiting activity of these toxins and reducing the formation of lethal double-strand breaks in the cell. In Dickeya dadantii (strain 3937) (Erwinia chrysanthemi (strain 3937)), this protein is DNA gyrase inhibitor 1.